A 354-amino-acid polypeptide reads, in one-letter code: MEAVLILEDGTILKGKGFGAEKEVFGELVFTTVMTGYVEVLTDPSYKGQIVMMTYPLEGNYGVKKDWFESDGIKAEGFVVREVTSKALDDFLKEYDIPGIQDIDTRFLTRKIRDKGVVKSCLKVAEEISDDEISELLERVKRYSDISDIDLVPLVSTKEPKIHKTANPKARCVLIDCGVKLNIIRSLVQRNCEVIQVPYNTKYDEILEYKPDFVLISNGPGDPARLKEVIKNIKNLIGVVPITGICLGNQLLSLAFGGETYKMKFGHRGGNQPVKDLKTQKVYITSQNHGFAVRKESLPDDVEVSFINLNDMTVEGIRHKDLPIFSVQFHPEARPGPHDTMFLFDEMIKLKDRK.

The segment at 1–167 is CPSase; sequence MEAVLILEDG…KEPKIHKTAN (167 aa). 3 residues coordinate L-glutamine: Ser45, Gly219, and Gly221. The region spanning 171 to 354 is the Glutamine amidotransferase type-1 domain; it reads RCVLIDCGVK…DEMIKLKDRK (184 aa). The Nucleophile role is filled by Cys246. L-glutamine is bound by residues Leu247, Gln250, Asn288, Gly290, and Phe291. Residues His330 and Glu332 contribute to the active site.

It belongs to the CarA family. In terms of assembly, composed of two chains; the small (or glutamine) chain promotes the hydrolysis of glutamine to ammonia, which is used by the large (or ammonia) chain to synthesize carbamoyl phosphate. Tetramer of heterodimers (alpha,beta)4.

It catalyses the reaction hydrogencarbonate + L-glutamine + 2 ATP + H2O = carbamoyl phosphate + L-glutamate + 2 ADP + phosphate + 2 H(+). The catalysed reaction is L-glutamine + H2O = L-glutamate + NH4(+). It functions in the pathway amino-acid biosynthesis; L-arginine biosynthesis; carbamoyl phosphate from bicarbonate: step 1/1. Its pathway is pyrimidine metabolism; UMP biosynthesis via de novo pathway; (S)-dihydroorotate from bicarbonate: step 1/3. In terms of biological role, small subunit of the glutamine-dependent carbamoyl phosphate synthetase (CPSase). CPSase catalyzes the formation of carbamoyl phosphate from the ammonia moiety of glutamine, carbonate, and phosphate donated by ATP, constituting the first step of 2 biosynthetic pathways, one leading to arginine and/or urea and the other to pyrimidine nucleotides. The small subunit (glutamine amidotransferase) binds and cleaves glutamine to supply the large subunit with the substrate ammonia. The sequence is that of Carbamoyl phosphate synthase small chain from Methanocaldococcus jannaschii (strain ATCC 43067 / DSM 2661 / JAL-1 / JCM 10045 / NBRC 100440) (Methanococcus jannaschii).